Here is a 30-residue protein sequence, read N- to C-terminus: Cytochrome c3, 50 kDa (30 aa).

In terms of assembly, monomer. Binds 4 heme groups per subunit.

Its subcellular location is the periplasm. In terms of biological role, participates in sulfate respiration coupled with phosphorylation by transferring electrons from the enzyme dehydrogenase to ferredoxin. The protein is Cytochrome c3, 50 kDa of Desulfuromonas acetoxidans (Chloropseudomonas ethylica).